The following is a 126-amino-acid chain: Bactofilin BacO (126 aa).

The protein belongs to the bactofilin family. Interacts with BacN and probably also BacP, the 3 proteins colocalize as an extended structure. Interacts with PadC.

Its subcellular location is the cytoplasm. The protein resides in the cytoskeleton. Its function is as follows. A non-essential component of the chromosome segregation machinery. Positions the ParA-ParB-parS chromosome segregation machinery within the cell; BacP seems to be the most important bactofilin in this process. Forms a heteropolymeric, subpolar scaffold in the cell; BacP probably forms the core, BacO contributes to position and integrity while BacN does not seem to contribute to assembly. The polypeptide is Bactofilin BacO (Myxococcus xanthus (strain DK1622)).